The sequence spans 261 residues: Cytochrome c oxidase subunit 3 (261 aa).

Residues 1–15 (MAHQAHAYHMVDPSP) lie on the Mitochondrial matrix side of the membrane. Residues 16 to 34 (WPLTGAVAALLMTSGLAVW) traverse the membrane as a helical segment. Residues 35–40 (FHFHSM) lie on the Mitochondrial intermembrane side of the membrane. Residues 41-66 (YLLYLGLTLLLLTMVQWWRDIIREGT) traverse the membrane as a helical segment. Topologically, residues 67-72 (FQGHHT) are mitochondrial matrix. Residues 73 to 105 (PPVQKGLRYGMILFITSEVFFFLGFFWAFYHSS) traverse the membrane as a helical segment. The Mitochondrial intermembrane portion of the chain corresponds to 106–128 (LAPTPELGGCWPPTGIYPLDPFE). A helical membrane pass occupies residues 129-152 (VPLLNTAVLLASGVTVTWAHHSLM). Residues 153–155 (EGN) lie on the Mitochondrial matrix side of the membrane. A helical transmembrane segment spans residues 156 to 183 (RKEAIQALTLTVLLGFYFTALQAMEYYE). At 184–190 (APFTIAD) the chain is on the mitochondrial intermembrane side. A helical membrane pass occupies residues 191-223 (GVYGSTFFVATGFHGLHVIIGSTFLMVCLLRQI). Residues 224–232 (QYHFTSEHH) are Mitochondrial matrix-facing. Residues 233–256 (FGFERAAWYWHFVDVVWLFLYVSI) traverse the membrane as a helical segment. Over 257-261 (YWWGS) the chain is Mitochondrial intermembrane.

This sequence belongs to the cytochrome c oxidase subunit 3 family. As to quaternary structure, component of the cytochrome c oxidase (complex IV, CIV), a multisubunit enzyme composed of 14 subunits. The complex is composed of a catalytic core of 3 subunits MT-CO1, MT-CO2 and MT-CO3, encoded in the mitochondrial DNA, and 11 supernumerary subunits COX4I, COX5A, COX5B, COX6A, COX6B, COX6C, COX7A, COX7B, COX7C, COX8 and NDUFA4, which are encoded in the nuclear genome. The complex exists as a monomer or a dimer and forms supercomplexes (SCs) in the inner mitochondrial membrane with NADH-ubiquinone oxidoreductase (complex I, CI) and ubiquinol-cytochrome c oxidoreductase (cytochrome b-c1 complex, complex III, CIII), resulting in different assemblies (supercomplex SCI(1)III(2)IV(1) and megacomplex MCI(2)III(2)IV(2)).

Its subcellular location is the mitochondrion inner membrane. The enzyme catalyses 4 Fe(II)-[cytochrome c] + O2 + 8 H(+)(in) = 4 Fe(III)-[cytochrome c] + 2 H2O + 4 H(+)(out). In terms of biological role, component of the cytochrome c oxidase, the last enzyme in the mitochondrial electron transport chain which drives oxidative phosphorylation. The respiratory chain contains 3 multisubunit complexes succinate dehydrogenase (complex II, CII), ubiquinol-cytochrome c oxidoreductase (cytochrome b-c1 complex, complex III, CIII) and cytochrome c oxidase (complex IV, CIV), that cooperate to transfer electrons derived from NADH and succinate to molecular oxygen, creating an electrochemical gradient over the inner membrane that drives transmembrane transport and the ATP synthase. Cytochrome c oxidase is the component of the respiratory chain that catalyzes the reduction of oxygen to water. Electrons originating from reduced cytochrome c in the intermembrane space (IMS) are transferred via the dinuclear copper A center (CU(A)) of subunit 2 and heme A of subunit 1 to the active site in subunit 1, a binuclear center (BNC) formed by heme A3 and copper B (CU(B)). The BNC reduces molecular oxygen to 2 water molecules using 4 electrons from cytochrome c in the IMS and 4 protons from the mitochondrial matrix. The protein is Cytochrome c oxidase subunit 3 (MT-CO3) of Squalus acanthias (Spiny dogfish).